Consider the following 180-residue polypeptide: ATP synthase subunit b 2 (180 aa).

The helical transmembrane segment at 33–53 (IFWLLVTLVAIYFLLTRVALP) threads the bilayer.

This sequence belongs to the ATPase B chain family. F-type ATPases have 2 components, F(1) - the catalytic core - and F(0) - the membrane proton channel. F(1) has five subunits: alpha(3), beta(3), gamma(1), delta(1), epsilon(1). F(0) has three main subunits: a(1), b(2) and c(10-14). The alpha and beta chains form an alternating ring which encloses part of the gamma chain. F(1) is attached to F(0) by a central stalk formed by the gamma and epsilon chains, while a peripheral stalk is formed by the delta and b chains.

It is found in the cell inner membrane. F(1)F(0) ATP synthase produces ATP from ADP in the presence of a proton or sodium gradient. F-type ATPases consist of two structural domains, F(1) containing the extramembraneous catalytic core and F(0) containing the membrane proton channel, linked together by a central stalk and a peripheral stalk. During catalysis, ATP synthesis in the catalytic domain of F(1) is coupled via a rotary mechanism of the central stalk subunits to proton translocation. Functionally, component of the F(0) channel, it forms part of the peripheral stalk, linking F(1) to F(0). The b'-subunit is a diverged and duplicated form of b found in plants and photosynthetic bacteria. This chain is ATP synthase subunit b 2 (atpF2), found in Cereibacter sphaeroides (strain ATCC 17029 / ATH 2.4.9) (Rhodobacter sphaeroides).